Consider the following 280-residue polypeptide: Large ribosomal subunit protein uL2cz/uL2cy (280 aa).

Disordered stretches follow at residues 1–25 (MAIHLYKTSTPSTRNGAVDSQVKSN) and 231–280 (PVDH…RRTK).

Belongs to the universal ribosomal protein uL2 family. As to quaternary structure, part of the 50S ribosomal subunit.

The protein localises to the plastid. Its subcellular location is the chloroplast. This Platanus occidentalis (Sycamore) protein is Large ribosomal subunit protein uL2cz/uL2cy (rpl2-A).